Reading from the N-terminus, the 634-residue chain is UPF0313 protein PG_0934 (634 aa).

A Radical SAM core domain is found at A302–K582. Residues C316, C320, and C323 each contribute to the [4Fe-4S] cluster site. The segment at D607–S634 is disordered. Residues R625–S634 show a composition bias toward basic residues.

It belongs to the UPF0313 family. It depends on [4Fe-4S] cluster as a cofactor.

In Porphyromonas gingivalis (strain ATCC BAA-308 / W83), this protein is UPF0313 protein PG_0934.